The sequence spans 507 residues: Dolichyl pyrophosphate Man9GlcNAc2 alpha-1,3-glucosyltransferase (507 aa).

At methionine 1–lysine 3 the chain is on the cytoplasmic side. The helical transmembrane segment at tryptophan 4–asparagine 24 threads the bilayer. At serine 25–threonine 114 the chain is on the lumenal side. A glycan (N-linked (GlcNAc...) asparagine) is linked at asparagine 59. A helical transmembrane segment spans residues threonine 115–leucine 135. The Cytoplasmic segment spans residues lysine 136–lysine 143. The helical transmembrane segment at isoleucine 144–phenylalanine 164 threads the bilayer. The Lumenal segment spans residues glutamine 165–glycine 172. Residues phenylalanine 173–phenylalanine 193 form a helical membrane-spanning segment. Topologically, residues cysteine 194–lysine 226 are cytoplasmic. The chain crosses the membrane as a helical span at residues glycine 227–leucine 247. Residues proline 248–glutamine 297 are Lumenal-facing. Residues leucine 298 to leucine 318 traverse the membrane as a helical segment. Over glutamine 319–lysine 323 the chain is Cytoplasmic. The chain crosses the membrane as a helical span at residues glycine 324 to histidine 344. Residues glutamate 345–glutamate 361 are Lumenal-facing. The helical transmembrane segment at isoleucine 362–leucine 382 threads the bilayer. Over lysine 383–leucine 387 the chain is Cytoplasmic. The chain crosses the membrane as a helical span at residues methionine 388–phenylalanine 408. Over glutamate 409–arginine 437 the chain is Lumenal. The helical transmembrane segment at isoleucine 438 to valine 458 threads the bilayer. Residues threonine 459–leucine 473 are Cytoplasmic-facing. The helical transmembrane segment at valine 474 to valine 494 threads the bilayer. Residues tryptophan 495–serine 507 are Lumenal-facing.

Belongs to the ALG6/ALG8 glucosyltransferase family.

The protein localises to the endoplasmic reticulum membrane. It carries out the reaction an alpha-D-Man-(1-&gt;2)-alpha-D-Man-(1-&gt;2)-alpha-D-Man-(1-&gt;3)-[alpha-D-Man-(1-&gt;2)-alpha-D-Man-(1-&gt;3)-[alpha-D-Man-(1-&gt;2)-alpha-D-Man-(1-&gt;6)]-alpha-D-Man-(1-&gt;6)]-beta-D-Man-(1-&gt;4)-beta-D-GlcNAc-(1-&gt;4)-alpha-D-GlcNAc-diphospho-di-trans,poly-cis-dolichol + a di-trans,poly-cis-dolichyl beta-D-glucosyl phosphate = an alpha-D-Glc-(1-&gt;3)-alpha-D-Man-(1-&gt;2)-alpha-D-Man-(1-&gt;2)-alpha-D-Man-(1-&gt;3)-[alpha-D-Man-(1-&gt;2)-alpha-D-Man-(1-&gt;3)-[alpha-D-Man-(1-&gt;2)-alpha-D-Man-(1-&gt;6)]-alpha-D-Man-(1-&gt;6)]-beta-D-Man-(1-&gt;4)-beta-D-GlcNAc-(1-&gt;4)-alpha-D-GlcNAc-diphospho-di-trans,poly-cis-dolichol + a di-trans,poly-cis-dolichyl phosphate + H(+). It participates in protein modification; protein glycosylation. In terms of biological role, dolichyl pyrophosphate Man9GlcNAc2 alpha-1,3-glucosyltransferase that operates in the biosynthetic pathway of dolichol-linked oligosaccharides, the glycan precursors employed in protein asparagine (N)-glycosylation. The assembly of dolichol-linked oligosaccharides begins on the cytosolic side of the endoplasmic reticulum membrane and finishes in its lumen. The sequential addition of sugars to dolichol pyrophosphate produces dolichol-linked oligosaccharides containing fourteen sugars, including two GlcNAcs, nine mannoses and three glucoses. Once assembled, the oligosaccharide is transferred from the lipid to nascent proteins by oligosaccharyltransferases. In the lumen of the endoplasmic reticulum, adds the first glucose residue from dolichyl phosphate glucose (Dol-P-Glc) onto the lipid-linked oligosaccharide intermediate Man(9)GlcNAc(2)-PP-Dol to produce Glc(1)Man(9)GlcNAc(2)-PP-Dol. Glc(1)Man(9)GlcNAc(2)-PP-Dol is a substrate for ALG8, the following enzyme in the biosynthetic pathway. This Pongo abelii (Sumatran orangutan) protein is Dolichyl pyrophosphate Man9GlcNAc2 alpha-1,3-glucosyltransferase.